The chain runs to 347 residues: Homoisocitrate dehydrogenase (347 aa).

68 to 70 (ITS) is a binding site for NADH. Ser-70 contributes to the (2R,3S)-homoisocitrate binding site. Residue Ser-81 is modified to Phosphoserine. Arg-87, Arg-97, Arg-128, Tyr-135, Lys-181, and Asn-183 together coordinate (2R,3S)-homoisocitrate. Residue Asn-183 participates in NADH binding. Asp-213, Asp-237, and Asp-241 together coordinate Mg(2+). Residues 270 to 274 (GSAPD) and Asn-282 each bind NADH.

It belongs to the isocitrate and isopropylmalate dehydrogenases family. The cofactor is Mg(2+).

It catalyses the reaction (2R,3S)-homoisocitrate + NAD(+) = 2-oxoadipate + CO2 + NADH. The catalysed reaction is (2R,3S)-iso(homo)2citrate + NAD(+) = 2-oxoheptanedioate + CO2 + NADH. The enzyme catalyses (2R,3S)-iso(homo)3citrate + NAD(+) = 2-oxosuberate + CO2 + NADH. The protein operates within organic acid metabolism; 2-oxosuberate biosynthesis. Its function is as follows. Catalyzes the NAD-dependent oxidation and decarboxylation of (2R,3S)-homoisocitrate, (2R,3S)-homo(2)-isocitrate and (2R,3S)-homo(3)-isocitrate, into 2-oxoadipate, 2-oxopimelate (2-oxoheptanedioate), and 2-oxosuberate, respectively. All these substrates are intermediates in the biosynthesis of biotin and of 7-mercaptoheptanoate, a moiety of coenzyme B in methanoarchaea. Is also able to produce 2-oxoazelate from (2R,3S)-homo(4)-isocitrate in vitro, but this substrate is probably not physiologically relevant. Is unable to use any isomer of isocitrate or isopropylmalate as a substrate, and NADP as an oxidant. The protein is Homoisocitrate dehydrogenase (aksF) of Methanocaldococcus jannaschii (strain ATCC 43067 / DSM 2661 / JAL-1 / JCM 10045 / NBRC 100440) (Methanococcus jannaschii).